The chain runs to 338 residues: Large ribosomal subunit protein uL3 (338 aa).

4 disordered regions span residues 1-44 (MPQP…GFAG), 151-170 (AVPS…VGGG), 206-259 (VTKG…GQTG), and 312-338 (FRPA…SNQG). Residues 22–31 (SETPRFNSWP) are compositionally biased toward polar residues. Residues 220 to 237 (GVQKRKGKHARQGWRRRI) show a composition bias toward basic residues. The span at 247–259 (RVRSTVPQQGQTG) shows a compositional bias: polar residues.

Belongs to the universal ribosomal protein uL3 family. Part of the 50S ribosomal subunit. Forms a cluster with proteins L14 and L24e. Interacts weakly with protein L13.

Its function is as follows. One of the primary rRNA binding proteins, it binds directly near the 3'-end of the 23S rRNA, where it nucleates assembly of the 50S subunit. The polypeptide is Large ribosomal subunit protein uL3 (rpl3) (Haloarcula marismortui (strain ATCC 43049 / DSM 3752 / JCM 8966 / VKM B-1809) (Halobacterium marismortui)).